The following is a 186-amino-acid chain: Elongation factor P (186 aa).

The protein belongs to the elongation factor P family.

It localises to the cytoplasm. It participates in protein biosynthesis; polypeptide chain elongation. Involved in peptide bond synthesis. Stimulates efficient translation and peptide-bond synthesis on native or reconstituted 70S ribosomes in vitro. Probably functions indirectly by altering the affinity of the ribosome for aminoacyl-tRNA, thus increasing their reactivity as acceptors for peptidyl transferase. The polypeptide is Elongation factor P (Shewanella woodyi (strain ATCC 51908 / MS32)).